Here is a 178-residue protein sequence, read N- to C-terminus: Bifunctional protein PyrR (178 aa).

Residues 99 to 111 carry the PRPP-binding motif; it reads IILVDDVLFTGRT.

The protein belongs to the purine/pyrimidine phosphoribosyltransferase family. PyrR subfamily. As to quaternary structure, homodimer and homohexamer; in equilibrium.

The enzyme catalyses UMP + diphosphate = 5-phospho-alpha-D-ribose 1-diphosphate + uracil. In terms of biological role, regulates transcriptional attenuation of the pyrimidine nucleotide (pyr) operon by binding in a uridine-dependent manner to specific sites on pyr mRNA. This disrupts an antiterminator hairpin in the RNA and favors formation of a downstream transcription terminator, leading to a reduced expression of downstream genes. Its function is as follows. Also displays a weak uracil phosphoribosyltransferase activity which is not physiologically significant. This Clostridium novyi (strain NT) protein is Bifunctional protein PyrR.